The chain runs to 1180 residues: IQ domain-containing protein N (1180 aa).

Residues 34-78 (HPPAPAHPSLLDKMEKAPPQPQHEGLKSKEHLPQQPAEGKTASRR) are disordered. The 30-residue stretch at 103–132 (HARAATLIQANWRGYWLRQKLISQMMAAKA) folds into the IQ 1 domain. Disordered stretches follow at residues 283–324 (RVSA…ETPK), 476–496 (MSKT…PQTR), and 786–820 (QRLG…TQGG). 5 consecutive IQ domains span residues 926–955 (RILA…GAMV), 956–978 (IQAT…ATTT), 979–1001 (IQSA…MLHP), 1113–1142 (QDKA…AAKI), and 1143–1165 (VQAT…LLGP).

As to quaternary structure, interacts with calmodulin.

Essential for spermiogenesis and fertilization. May be required for manchette assembly in elongating spermatids. In Homo sapiens (Human), this protein is IQ domain-containing protein N.